The chain runs to 427 residues: Gamma-glutamyl phosphate reductase (427 aa).

It belongs to the gamma-glutamyl phosphate reductase family.

It is found in the cytoplasm. The enzyme catalyses L-glutamate 5-semialdehyde + phosphate + NADP(+) = L-glutamyl 5-phosphate + NADPH + H(+). It functions in the pathway amino-acid biosynthesis; L-proline biosynthesis; L-glutamate 5-semialdehyde from L-glutamate: step 2/2. Its function is as follows. Catalyzes the NADPH-dependent reduction of L-glutamate 5-phosphate into L-glutamate 5-semialdehyde and phosphate. The product spontaneously undergoes cyclization to form 1-pyrroline-5-carboxylate. This is Gamma-glutamyl phosphate reductase from Gluconobacter oxydans (strain 621H) (Gluconobacter suboxydans).